The following is a 246-amino-acid chain: Ribosomal RNA small subunit methyltransferase G (246 aa).

S-adenosyl-L-methionine is bound by residues Gly-81, Phe-86, 137–138, and Arg-156; that span reads AE. The disordered stretch occupies residues 221–246; it reads LVLIRKERPTPKAYPRRAGVPAKSPL.

This sequence belongs to the methyltransferase superfamily. RNA methyltransferase RsmG family.

The protein localises to the cytoplasm. Functionally, specifically methylates the N7 position of a guanine in 16S rRNA. The polypeptide is Ribosomal RNA small subunit methyltransferase G (Symbiobacterium thermophilum (strain DSM 24528 / JCM 14929 / IAM 14863 / T)).